A 185-amino-acid polypeptide reads, in one-letter code: Adenine phosphoribosyltransferase (185 aa).

Belongs to the purine/pyrimidine phosphoribosyltransferase family. Homodimer.

The protein localises to the cytoplasm. It catalyses the reaction AMP + diphosphate = 5-phospho-alpha-D-ribose 1-diphosphate + adenine. It participates in purine metabolism; AMP biosynthesis via salvage pathway; AMP from adenine: step 1/1. Catalyzes a salvage reaction resulting in the formation of AMP, that is energically less costly than de novo synthesis. The sequence is that of Adenine phosphoribosyltransferase from Aliarcobacter butzleri (strain RM4018) (Arcobacter butzleri).